Here is a 62-residue protein sequence, read N- to C-terminus: Disintegrin schistatin-like subunit A (62 aa).

The Disintegrin domain maps to 1 to 62; the sequence is SVNPCCDPVI…TTDCPRNRYN (62 aa). Intrachain disulfides connect Cys5-Cys28, Cys19-Cys25, Cys24-Cys49, and Cys37-Cys56. The Cell attachment site motif lies at 41 to 43; that stretch reads RGD.

This sequence belongs to the disintegrin family. Dimeric disintegrin subfamily. As to quaternary structure, heterodimer with subunit B; disulfide-linked. In terms of tissue distribution, expressed by the venom gland.

The protein localises to the secreted. Functionally, may bind to both alpha-IIb/beta-3 (ITGA2B/ITGB3) and alpha-V/beta-3 (ITGAV/ITGB3) integrins, and may inhibit platelet aggregation. The protein is Disintegrin schistatin-like subunit A of Echis carinatus (Saw-scaled viper).